The chain runs to 551 residues: Hydroxymethylpyrimidine/phosphomethylpyrimidine kinase THI21 (551 aa).

A 4-amino-5-hydroxymethyl-2-methylpyrimidine-binding site is contributed by Gln-64.

In the N-terminal section; belongs to the ThiD family. It in the C-terminal section; belongs to the thiaminase-2 family.

The enzyme catalyses 4-amino-5-hydroxymethyl-2-methylpyrimidine + ATP = 4-amino-2-methyl-5-(phosphooxymethyl)pyrimidine + ADP + H(+). The catalysed reaction is 4-amino-2-methyl-5-(phosphooxymethyl)pyrimidine + ATP = 4-amino-2-methyl-5-(diphosphooxymethyl)pyrimidine + ADP. It functions in the pathway cofactor biosynthesis; thiamine diphosphate biosynthesis; 4-amino-2-methyl-5-diphosphomethylpyrimidine from 5-amino-1-(5-phospho-D-ribosyl)imidazole: step 2/3. The protein operates within cofactor biosynthesis; thiamine diphosphate biosynthesis; 4-amino-2-methyl-5-diphosphomethylpyrimidine from 5-amino-1-(5-phospho-D-ribosyl)imidazole: step 3/3. Functionally, catalyzes the phosphorylation of hydroxymethylpyrimidine phosphate (HMP-P) to HMP-PP, and also probably that of HMP to HMP-P. The polypeptide is Hydroxymethylpyrimidine/phosphomethylpyrimidine kinase THI21 (THI21) (Saccharomyces cerevisiae (strain ATCC 204508 / S288c) (Baker's yeast)).